A 329-amino-acid polypeptide reads, in one-letter code: Ribosomal RNA small subunit methyltransferase C (329 aa).

It belongs to the methyltransferase superfamily. RsmC family. In terms of assembly, monomer.

It is found in the cytoplasm. The enzyme catalyses guanosine(1207) in 16S rRNA + S-adenosyl-L-methionine = N(2)-methylguanosine(1207) in 16S rRNA + S-adenosyl-L-homocysteine + H(+). Specifically methylates the guanine in position 1207 of 16S rRNA in the 30S particle. The protein is Ribosomal RNA small subunit methyltransferase C of Actinobacillus pleuropneumoniae serotype 7 (strain AP76).